The following is a 271-amino-acid chain: Mannosyl-3-phosphoglycerate phosphatase (271 aa).

The active-site Nucleophile is the D13. Residues D13, D15, and D214 each contribute to the Mg(2+) site.

This sequence belongs to the HAD-like hydrolase superfamily. MPGP family. Mg(2+) serves as cofactor.

The protein resides in the cytoplasm. The enzyme catalyses 2-O-(alpha-D-mannosyl)-3-phosphoglycerate + H2O = (2R)-2-O-(alpha-D-mannosyl)-glycerate + phosphate. In Escherichia coli O17:K52:H18 (strain UMN026 / ExPEC), this protein is Mannosyl-3-phosphoglycerate phosphatase.